The sequence spans 512 residues: Cytokinin hydroxylase (512 aa).

Residues 2 to 22 form a helical membrane-spanning segment; that stretch reads MVTLVLKYVLVIVMTLILRVL. C458 is a heme binding site.

This sequence belongs to the cytochrome P450 family. Requires heme as cofactor. As to expression, specifically expressed in roots.

It localises to the membrane. The catalysed reaction is N(6)-(dimethylallyl)adenosine 5'-phosphate + NADPH + O2 + H(+) = 9-ribosyl-trans-zeatin 5'-phosphate + NADP(+) + H2O. The enzyme catalyses N(6)-(dimethylallyl)adenosine 5'-diphosphate + NADPH + O2 + H(+) = 9-ribosyl-trans-zeatin 5'-diphosphate + NADP(+) + H2O. It catalyses the reaction N(6)-(dimethylallyl)adenosine 5'-triphosphate + NADPH + O2 + H(+) = 9-ribosyl-trans-zeatin 5'-triphosphate + NADP(+) + H2O. In terms of biological role, cytokinin hydroxylase that catalyzes the biosynthesis of trans-zeatin via the isopentenyladenine riboside 5'-monophosphate (iPRMP)-dependent pathway. Can use isopentenyladenosine-5'-monophosphate, isopentenyladenosine-5'-diphosphate and isopentenyladenosine-5'-triphosphate as substrate. In Arabidopsis thaliana (Mouse-ear cress), this protein is Cytokinin hydroxylase (CYP735A2).